The following is a 269-amino-acid chain: Nitrogen regulatory protein DAL80 (269 aa).

The GATA-type zinc finger occupies 31 to 55; that stretch reads CQNCFTVKTPLWRRDEHGTVLCNAC.

Its subcellular location is the nucleus. Its function is as follows. Negative regulator of multiple nitrogen catabolic genes including the allantoin pathway genes. The sequence is that of Nitrogen regulatory protein DAL80 (DAL80) from Saccharomyces cerevisiae (strain ATCC 204508 / S288c) (Baker's yeast).